The chain runs to 339 residues: uncharacterized protein (339 aa).

Positions 17–111 constitute a Rhodanese domain; sequence VRGEIKCLDV…WEDLSLPQNE (95 aa).

This is an uncharacterized protein from Schizosaccharomyces pombe (strain 972 / ATCC 24843) (Fission yeast).